We begin with the raw amino-acid sequence, 240 residues long: Lysoplasmalogenase TMEM86A (240 aa).

The Cytoplasmic segment spans residues 1 to 21 (MVSPVTVVKSEGPKLVPFFKA). A helical transmembrane segment spans residues 22 to 42 (TCVYFVLWLPSSSPSWVSTLI). A topological domain (extracellular) is located at residue Lys43. The chain crosses the membrane as a helical span at residues 44–64 (CLPIFCLWLFLLAHGLGFLLA). Topologically, residues 65–70 (HPSATR) are cytoplasmic. A helical transmembrane segment spans residues 71–91 (IFVGLVFSAVGDAFLIWQDQG). A topological domain (extracellular) is located at residue Tyr92. A helical membrane pass occupies residues 93–113 (FVHGLLMFAVTHMFYASAFGM). Residues 114–115 (QP) lie on the Cytoplasmic side of the membrane. The chain crosses the membrane as a helical span at residues 116 to 136 (LALRTGLVMAALSGLCYALLY). Residues 137-138 (PC) are Extracellular-facing. The helical transmembrane segment at 139–159 (LSGAFTYLVGVYVALIGFMGW) threads the bilayer. Topologically, residues 160-174 (RAMAGLRLAGADWRW) are cytoplasmic. Residues 175–195 (TELAAGSGALFFIISDLTIAL) form a helical membrane-spanning segment. Over 196–206 (NKFCFPVPYSR) the chain is Extracellular. Residues 207 to 227 (ALIMSTYYVAQMLVALSAVES) form a helical membrane-spanning segment. The Cytoplasmic segment spans residues 228-240 (REPVEHYRLTKAN).

Belongs to the TMEM86 family. Expressed in the macrophages.

The protein localises to the endoplasmic reticulum membrane. The enzyme catalyses a 1-O-(1Z-alkenyl)-sn-glycero-3-phosphocholine + H2O = a 2,3-saturated aldehyde + sn-glycerol 3-phosphocholine. It carries out the reaction a 1-O-(1Z-alkenyl)-sn-glycero-3-phosphoethanolamine + H2O = a 2,3-saturated aldehyde + sn-glycero-3-phosphoethanolamine. Functionally, catalyzes the hydrolysis of the vinyl ether bond of choline or ethanolamine lysoplasmalogens, forming fatty aldehyde and glycerophosphocholine or glycerophosphoethanolamine, respectively and is specific for the sn-2-deacylated (lyso) form of plasmalogen. Plays an important role in lysoplasmalogen metabolism in the adipocyte tissue and macrophages. The polypeptide is Lysoplasmalogenase TMEM86A (TMEM86A) (Homo sapiens (Human)).